A 174-amino-acid chain; its full sequence is Calcineurin subunit B (174 aa).

4 consecutive EF-hand domains span residues 21–56, 60–88, 90–125, and 131–166; these read EEIE…SSNP, RLMD…FSGK, SKLD…MVGK, and ELQQ…KSVA. The Ca(2+) site is built by D34, D36, S38, T40, E45, D66, D68, N70, T72, E77, D103, D105, D107, Y109, E114, D144, D146, D148, R150, and E155.

Belongs to the calcineurin regulatory subunit family. Composed of a catalytic subunit (A) and a regulatory subunit (B).

Its function is as follows. Regulatory subunit of calcineurin, a calcium-dependent, calmodulin stimulated protein phosphatase. Confers calcium sensitivity. The protein is Calcineurin subunit B (CNB1) of Debaryomyces hansenii (strain ATCC 36239 / CBS 767 / BCRC 21394 / JCM 1990 / NBRC 0083 / IGC 2968) (Yeast).